The chain runs to 750 residues: Xylosyl- and glucuronyltransferase LARGE2s (750 aa).

Residues methionine 1–lysine 10 lie on the Cytoplasmic side of the membrane. A helical; Signal-anchor for type II membrane protein transmembrane segment spans residues leucine 11–asparagine 31. Residues serine 32 to isoleucine 750 are Lumenal-facing. Asparagine 116, asparagine 142, and asparagine 228 each carry an N-linked (GlcNAc...) asparagine glycan. The xylosyltransferase activity stretch occupies residues leucine 132–arginine 407. Mn(2+) is bound by residues aspartate 236 and aspartate 238. Residue asparagine 266 is glycosylated (N-linked (GlcNAc...) asparagine). The interval arginine 408–isoleucine 750 is glucuronyltransferase activity. Mn(2+) is bound by residues aspartate 557 and aspartate 559.

In the C-terminal section; belongs to the glycosyltransferase 49 family. It in the N-terminal section; belongs to the glycosyltransferase 8 family. It depends on Mn(2+) as a cofactor.

The protein resides in the golgi apparatus membrane. It carries out the reaction 3-O-[beta-D-GlcA-(1-&gt;3)-beta-D-Xyl-(1-&gt;4)-Rib-ol-P-Rib-ol-P-3-beta-D-GalNAc-(1-&gt;3)-beta-D-GlcNAc-(1-&gt;4)-(O-6-P-alpha-D-Man)]-Thr-[protein] + UDP-alpha-D-xylose = 3-O-[alpha-D-Xyl-(1-&gt;3)-beta-D-GlcA-(1-&gt;4)-beta-D-Xyl-(1-&gt;4)-Rib-ol-P-Rib-ol-P-3-beta-D-GalNAc-(1-&gt;3)-beta-D-GlcNAc-(1-&gt;4)-(O-6-P-alpha-D-Man)]-Thr-[protein] + UDP + H(+). The enzyme catalyses 3-O-{(1-&gt;[3)-alpha-D-Xyl-(1-&gt;3)-beta-D-GlcA-(1-&gt;](n)-4)-beta-D-Xyl-(1-&gt;4)-Rib-ol-P-Rib-ol-P-3-beta-D-GalNAc-(1-&gt;3)-beta-D-GlcNAc-(1-&gt;4)-O-6-P-alpha-D-Man}-L-Thr-[protein] + UDP-alpha-D-glucuronate = 3-O-{beta-D-GlcA-(1-&gt;[3)-alpha-D-Xyl-(1-&gt;3)-beta-D-GlcA-(1-&gt;](n)-4)-beta-D-Xyl-(1-&gt;4)-Rib-ol-P-Rib-ol-P-3-beta-D-GalNAc-(1-&gt;3)-beta-D-GlcNAc-(1-&gt;4)-O-6-P-alpha-D-Man}-L-Thr-[protein] + UDP + H(+). It catalyses the reaction 3-O-{beta-D-GlcA-(1-&gt;[3)-alpha-D-Xyl-(1-&gt;3)-beta-D-GlcA-(1-&gt;](n)-4)-beta-D-Xyl-(1-&gt;4)-Rib-ol-P-Rib-ol-P-3-beta-D-GalNAc-(1-&gt;3)-beta-D-GlcNAc-(1-&gt;4)-O-6-P-alpha-D-Man}-L-Thr-[protein] + UDP-alpha-D-xylose = 3-O-{(1-&gt;[3)-alpha-D-Xyl-(1-&gt;3)-beta-D-GlcA-(1-&gt;](n+1)-4)-beta-D-Xyl-(1-&gt;4)-Rib-ol-P-Rib-ol-P-3-beta-D-GalNAc-(1-&gt;3)-beta-D-GlcNAc-(1-&gt;4)-O-6-P-alpha-D-Man}-L-Thr-[protein] + UDP + H(+). It participates in protein modification; protein glycosylation. In terms of biological role, bifunctional glycosyltransferase with both alpha-1,3-xylosyltransferase and beta-1,3-glucuronyltransferase activities involved in the maturation of alpha-dystroglycan (DAG1) by glycosylation leading to DAG1 binding to laminin G-like domain-containing extracellular proteins with high affinity and in a phosphorylated-O-mannosyl trisaccharide dependent manner. Elongates the glucuronyl-beta-1,4-xylose-beta disaccharide primer structure by adding repeating units [-3-Xylose-alpha-1,3-GlcA-beta-1-] to produce a heteropolysaccharide. Supports the maturation of DAG1 more effectively than LARGE1. In addition, can modify both heparan sulfate (HS)- and chondroitin/dermatan sulfate (CS/DS)-proteoglycans (PGs), namely GPC4, with a glycosaminoglycan (GAG)-like polysaccharide composed of xylose and glucuronic acid to confer laminin binding. In Danio rerio (Zebrafish), this protein is Xylosyl- and glucuronyltransferase LARGE2s.